The primary structure comprises 270 residues: Undecaprenyl-diphosphatase 1 (270 aa).

The next 7 membrane-spanning stretches (helical) occupy residues 5–25 (YYVL…PIPI), 42–62 (IEGF…VLLI), 89–109 (FFFI…GVLF), 117–137 (LKGV…LWII), 192–212 (FSFL…ITDI), 220–240 (TLFV…YISL), and 250–270 (GNLK…LIFL).

It belongs to the UppP family.

It is found in the cell membrane. It carries out the reaction di-trans,octa-cis-undecaprenyl diphosphate + H2O = di-trans,octa-cis-undecaprenyl phosphate + phosphate + H(+). Its function is as follows. Catalyzes the dephosphorylation of undecaprenyl diphosphate (UPP). Confers resistance to bacitracin. This chain is Undecaprenyl-diphosphatase 1, found in Bacillus cereus (strain ATCC 14579 / DSM 31 / CCUG 7414 / JCM 2152 / NBRC 15305 / NCIMB 9373 / NCTC 2599 / NRRL B-3711).